Reading from the N-terminus, the 408-residue chain is Arginine biosynthesis bifunctional protein ArgJ (408 aa).

Residues threonine 158, lysine 184, threonine 195, glutamate 281, asparagine 403, and threonine 408 each contribute to the substrate site. Catalysis depends on threonine 195, which acts as the Nucleophile.

The protein belongs to the ArgJ family. Heterotetramer of two alpha and two beta chains.

The protein resides in the cytoplasm. It carries out the reaction N(2)-acetyl-L-ornithine + L-glutamate = N-acetyl-L-glutamate + L-ornithine. The catalysed reaction is L-glutamate + acetyl-CoA = N-acetyl-L-glutamate + CoA + H(+). The protein operates within amino-acid biosynthesis; L-arginine biosynthesis; L-ornithine and N-acetyl-L-glutamate from L-glutamate and N(2)-acetyl-L-ornithine (cyclic): step 1/1. Its pathway is amino-acid biosynthesis; L-arginine biosynthesis; N(2)-acetyl-L-ornithine from L-glutamate: step 1/4. Its function is as follows. Catalyzes two activities which are involved in the cyclic version of arginine biosynthesis: the synthesis of N-acetylglutamate from glutamate and acetyl-CoA as the acetyl donor, and of ornithine by transacetylation between N(2)-acetylornithine and glutamate. The sequence is that of Arginine biosynthesis bifunctional protein ArgJ from Bacillus cereus (strain ATCC 14579 / DSM 31 / CCUG 7414 / JCM 2152 / NBRC 15305 / NCIMB 9373 / NCTC 2599 / NRRL B-3711).